The primary structure comprises 154 residues: Myoglobin (154 aa).

In terms of domain architecture, Globin spans 2 to 148 (GLSDGEWQLV…FRNDMAAQYK (147 aa)). Ser4 bears the Phosphoserine mark. His65 provides a ligand contact to nitrite. His65 is a binding site for O2. Residue Thr68 is modified to Phosphothreonine. His94 contacts heme b.

The protein belongs to the globin family. Monomeric.

Its subcellular location is the cytoplasm. It localises to the sarcoplasm. The enzyme catalyses Fe(III)-heme b-[protein] + nitric oxide + H2O = Fe(II)-heme b-[protein] + nitrite + 2 H(+). It catalyses the reaction H2O2 + AH2 = A + 2 H2O. In terms of biological role, monomeric heme protein which primary function is to store oxygen and facilitate its diffusion within muscle tissues. Reversibly binds oxygen through a pentacoordinated heme iron and enables its timely and efficient release as needed during periods of heightened demand. Depending on the oxidative conditions of tissues and cells, and in addition to its ability to bind oxygen, it also has a nitrite reductase activity whereby it regulates the production of bioactive nitric oxide. Under stress conditions, like hypoxia and anoxia, it also protects cells against reactive oxygen species thanks to its pseudoperoxidase activity. This Cervus elaphus (Red deer) protein is Myoglobin (MB).